Consider the following 444-residue polypeptide: Tol-Pal system protein TolB (444 aa).

The first 19 residues, 1–19 (MRNIIYFILSLLFSFKGYA), serve as a signal peptide directing secretion.

The protein belongs to the TolB family. The Tol-Pal system is composed of five core proteins: the inner membrane proteins TolA, TolQ and TolR, the periplasmic protein TolB and the outer membrane protein Pal. They form a network linking the inner and outer membranes and the peptidoglycan layer.

It is found in the periplasm. In terms of biological role, part of the Tol-Pal system, which plays a role in outer membrane invagination during cell division and is important for maintaining outer membrane integrity. This Rickettsia felis (strain ATCC VR-1525 / URRWXCal2) (Rickettsia azadi) protein is Tol-Pal system protein TolB.